Reading from the N-terminus, the 290-residue chain is ATP synthase gamma chain (290 aa).

Belongs to the ATPase gamma chain family. As to quaternary structure, F-type ATPases have 2 components, CF(1) - the catalytic core - and CF(0) - the membrane proton channel. CF(1) has five subunits: alpha(3), beta(3), gamma(1), delta(1), epsilon(1). CF(0) has three main subunits: a, b and c.

The protein resides in the cell inner membrane. In terms of biological role, produces ATP from ADP in the presence of a proton gradient across the membrane. The gamma chain is believed to be important in regulating ATPase activity and the flow of protons through the CF(0) complex. This Delftia acidovorans (strain DSM 14801 / SPH-1) protein is ATP synthase gamma chain.